The primary structure comprises 166 residues: Peptidyl-prolyl cis-trans isomerase cyp18 (166 aa).

Residues 2–164 (STVELNTSAG…QPVVIESAKI (163 aa)) form the PPIase cyclophilin-type domain.

This sequence belongs to the cyclophilin-type PPIase family. In terms of assembly, monomer.

The protein localises to the cytoplasm. It carries out the reaction [protein]-peptidylproline (omega=180) = [protein]-peptidylproline (omega=0). Inhibition by cyclosporin A with a Ki of 21 mu-mol. Functionally, PPIases accelerate the folding of proteins. It catalyzes the cis-trans isomerization of proline imidic peptide bonds in oligopeptides. The protein is Peptidyl-prolyl cis-trans isomerase cyp18 of Streptomyces antibioticus.